A 1200-amino-acid polypeptide reads, in one-letter code: PAN2-PAN3 deadenylation complex catalytic subunit Pan2 (1200 aa).

4 WD repeats span residues Asp153–Ala193, Glu195–Glu231, Val244–Pro280, and Pro328–Pro367. The tract at residues Tyr368 to His484 is linker. Positions Thr485 to Arg923 constitute a USP domain. Phosphoserine is present on Ser784. The region spanning Val974–Tyr1146 is the Exonuclease domain. A divalent metal cation contacts are provided by Asp977, Glu979, Asp1086, and Asp1138. Ser1188 carries the phosphoserine modification.

It belongs to the peptidase C19 family. PAN2 subfamily. In terms of assembly, forms a heterotrimer with an asymmetric homodimer of the regulatory subunit PAN3 to form the poly(A)-nuclease (PAN) deadenylation complex. Interacts with PAN3 isoform 1/Pan3L and isoform 3/Pan3S. Interacts with ZFP36. Requires a divalent metal cation as cofactor.

The protein localises to the cytoplasm. The protein resides in the P-body. It localises to the nucleus. The enzyme catalyses Exonucleolytic cleavage of poly(A) to 5'-AMP.. Its activity is regulated as follows. Positively regulated by the regulatory subunit PAN3. In terms of biological role, catalytic subunit of the poly(A)-nuclease (PAN) deadenylation complex, one of two cytoplasmic mRNA deadenylases involved in general and miRNA-mediated mRNA turnover. PAN specifically shortens poly(A) tails of RNA and the activity is stimulated by poly(A)-binding protein (PABP). PAN deadenylation is followed by rapid degradation of the shortened mRNA tails by the CCR4-NOT complex. Deadenylated mRNAs are then degraded by two alternative mechanisms, namely exosome-mediated 3'-5' exonucleolytic degradation, or deadenylation-dependent mRNA decaping and subsequent 5'-3' exonucleolytic degradation by XRN1. Also acts as an important regulator of the HIF1A-mediated hypoxic response. Required for HIF1A mRNA stability independent of poly(A) tail length regulation. The chain is PAN2-PAN3 deadenylation complex catalytic subunit Pan2 from Mus musculus (Mouse).